Here is a 418-residue protein sequence, read N- to C-terminus: Gamma-glutamyl phosphate reductase (418 aa).

Belongs to the gamma-glutamyl phosphate reductase family.

Its subcellular location is the cytoplasm. It carries out the reaction L-glutamate 5-semialdehyde + phosphate + NADP(+) = L-glutamyl 5-phosphate + NADPH + H(+). Its pathway is amino-acid biosynthesis; L-proline biosynthesis; L-glutamate 5-semialdehyde from L-glutamate: step 2/2. Catalyzes the NADPH-dependent reduction of L-glutamate 5-phosphate into L-glutamate 5-semialdehyde and phosphate. The product spontaneously undergoes cyclization to form 1-pyrroline-5-carboxylate. This Thermodesulfovibrio yellowstonii (strain ATCC 51303 / DSM 11347 / YP87) protein is Gamma-glutamyl phosphate reductase.